A 439-amino-acid polypeptide reads, in one-letter code: Proline--tRNA ligase (439 aa).

The protein belongs to the class-II aminoacyl-tRNA synthetase family. ProS type 2 subfamily. As to quaternary structure, homodimer.

It localises to the cytoplasm. It catalyses the reaction tRNA(Pro) + L-proline + ATP = L-prolyl-tRNA(Pro) + AMP + diphosphate. Its function is as follows. Catalyzes the attachment of proline to tRNA(Pro) in a two-step reaction: proline is first activated by ATP to form Pro-AMP and then transferred to the acceptor end of tRNA(Pro). This chain is Proline--tRNA ligase, found in Bradyrhizobium diazoefficiens (strain JCM 10833 / BCRC 13528 / IAM 13628 / NBRC 14792 / USDA 110).